The primary structure comprises 175 residues: Ribulose bisphosphate carboxylase small subunit, chloroplastic (175 aa).

The N-terminal 46 residues, 1–46 (MAPSVMASSATTVAPFQGLKSTAGMPVARRSGNSSFGNVSNGGRIR), are a transit peptide targeting the chloroplast. Residues 60–64 (ETLSY) form an interaction with large subunit region.

This sequence belongs to the RuBisCO small chain family. Heterohexadecamer of 8 large and 8 small subunits.

Its subcellular location is the plastid. It is found in the chloroplast. Functionally, ruBisCO catalyzes two reactions: the carboxylation of D-ribulose 1,5-bisphosphate, the primary event in carbon dioxide fixation, as well as the oxidative fragmentation of the pentose substrate. Both reactions occur simultaneously and in competition at the same active site. Although the small subunit is not catalytic it is essential for maximal activity. The polypeptide is Ribulose bisphosphate carboxylase small subunit, chloroplastic (Oryza sativa subsp. indica (Rice)).